A 127-amino-acid polypeptide reads, in one-letter code: Ycf91-like protein (127 aa).

This sequence belongs to the ycf91 family.

The sequence is that of Ycf91-like protein from Nostoc sp. (strain PCC 7120 / SAG 25.82 / UTEX 2576).